A 1257-amino-acid chain; its full sequence is Neurocan core protein (1257 aa).

Positions 1–22 (MGAESVWASGLLVLWLLLLVSG) are cleaved as a signal peptide. The Ig-like V-type domain maps to 37–157 (HMLKSGSGPI…EQDLVTLEVT (121 aa)). 5 disulfide bridges follow: Cys58–Cys139, Cys181–Cys252, Cys205–Cys226, Cys279–Cys354, and Cys303–Cys324. N-linked (GlcNAc...) asparagine glycosylation occurs at Asn121. Link domains are found at residues 159–254 (VVFH…YCFA) and 258–356 (GGEV…YCFR). N-linked (GlcNAc...) asparagine glycosylation is present at Asn339. The tract at residues 361-391 (TPQRGDSEIPSSGDEGEIVSAEGPPAPELKP) is disordered. 2 O-linked (Xyl...) (chondroitin sulfate) serine glycosylation sites follow: Ser380 and Ser410. The span at 447–459 (SSTGVPSPSSLGV) shows a compositional bias: low complexity. Disordered regions lie at residues 447–493 (SSTG…FQQQ), 550–610 (GSLG…AVPS), and 683–707 (GAEDPETPFQTTMAAPGEASHGSPE). Polar residues predominate over residues 464-473 (TTPSGTQVAP). Low complexity predominate over residues 569–580 (SPSTVPSTDSTP). A glycan (N-linked (GlcNAc...) asparagine) is linked at Asn737. O-linked (Xyl...) (chondroitin sulfate) serine glycosylation is present at Ser944. The EGF-like 1 domain maps to 949-985 (PTDPCENNPCLHGGTCRTNGTMYGCSCDQGYAGENCE). 11 disulfides stabilise this stretch: Cys953–Cys964, Cys958–Cys973, Cys975–Cys984, Cys991–Cys1002, Cys996–Cys1011, Cys1013–Cys1022, Cys1029–Cys1040, Cys1057–Cys1149, Cys1125–Cys1141, Cys1156–Cys1199, and Cys1185–Cys1212. Residue Asn967 is glycosylated (N-linked (GlcNAc...) asparagine). The EGF-like 2; calcium-binding domain occupies 987–1023 (DIDDCLCSPCENGGTCIDEVNGFICLCLPSYGGNLCE). One can recognise a C-type lectin domain in the interval 1025–1154 (DTEGCDRGWH…LPYVCKKGTV (130 aa)). The Sushi domain maps to 1154-1214 (VLCGPPPAVE…WDRPQIVCTK (61 aa)). The N-linked (GlcNAc...) asparagine glycan is linked to Asn1164. Residues 1215–1244 (PRRSHRMRRHHHHPHRHHKPRKEHRKHKRH) are compositionally biased toward basic residues. The segment at 1215 to 1257 (PRRSHRMRRHHHHPHRHHKPRKEHRKHKRHPAEDWEKDEGDFC) is disordered.

Belongs to the aggrecan/versican proteoglycan family. Post-translationally, two isoforms were found that probably arise by proteolytic processing. The large isoform is predominant in early postnatal brain, the small isoform is found in adult brain. O-glycosylated; contains chondroitin sulfate. In terms of tissue distribution, early postnatal and adult brain; not expressed in kidney, lung, liver and muscle.

The protein resides in the secreted. Its function is as follows. May modulate neuronal adhesion and neurite growth during development by binding to neural cell adhesion molecules (NG-CAM and N-CAM). Chondroitin sulfate proteoglycan; binds to hyaluronic acid. The protein is Neurocan core protein (Ncan) of Rattus norvegicus (Rat).